We begin with the raw amino-acid sequence, 162 residues long: Putative ankyrin repeat protein R664 (162 aa).

ANK repeat units follow at residues 10–40, 47–78, and 82–111; these read KKLVEFLLYSNQDCSLIVIDALITIGANVNY, NDTPILSVITKTSESNPETVKLLLDKGADVNY, and YHETALMRTIKYGNFGIAKILLDYGANPYL.

This chain is Putative ankyrin repeat protein R664, found in Acanthamoeba polyphaga mimivirus (APMV).